The sequence spans 130 residues: MAITQNYGTGRRKSSTARVFLRKGTGNITVNDRPLDEFFGRETARMIVRQPLELTKNTESFDIMVTASGGGTTGQAGAIRLGIARALVEYDETLKSELRKAGFMTRDAREVERKKVGLHKARRATQFSKR.

This sequence belongs to the universal ribosomal protein uS9 family.

In Xanthomonas axonopodis pv. citri (strain 306), this protein is Small ribosomal subunit protein uS9.